A 1430-amino-acid chain; its full sequence is Target of rapamycin complex 2 subunit TSC11 (1430 aa).

Residues 1–62 (MSIPHSAKQS…TITNESSKRN (62 aa)) form a disordered region. Composition is skewed to polar residues over residues 7–26 (AKQS…TTPL) and 35–44 (NSSTQISSAK). Phosphoserine is present on S19. Low complexity predominate over residues 45–57 (NITSSSPSTITNE). 4 positions are modified to phosphoserine: S81, S84, S87, and S141. The stretch at 91 to 180 (ARRTRSTMTK…EKHIFDLKQQ (90 aa)) forms a coiled coil. The interval 182–285 (DKKRQRSLTT…NLTGDTEKDL (104 aa)) is disordered. Residues 233 to 265 (TTPTSGTERNSQQNLNRNSTVNSRNNENHSTLS) show a composition bias toward polar residues. An N-terminal Ras-GEF domain is found at 995–1100 (SVVAVADQAL…FQQKSRLPLH (106 aa)).

This sequence belongs to the RICTOR family. In terms of assembly, the target of rapamycin complex 2 (TORC2) is composed of at least AVO1, AVO2, BIT61, LST8, TOR2 and TSC11. TORC2 forms a homodimer. Contrary to TORC1, TORC2 does not bind to and is not sensitive to FKBP-rapamycin. TSC11 binds to the N-terminal HEAT repeat region in TOR2 and is required for TORC2 integrity by tethering AVO1 and AVO2 to the complex. Phosphorylated by TOR2; when part of TORC2.

It is found in the cell membrane. The protein localises to the vacuole membrane. Functionally, essential component of TORC2, which regulates cell cycle-dependent polarization of the actin-cytoskeleton and cell wall integrity. TORC2 controls polarity of the actin cytoskeleton, which is required for orienting the secretory pathway toward discrete growth sites, via the RHO1/PKC1/MAPK cell integrity pathway. TSC11 may exert its functions through two distinct mechanisms, one mediated by AVO1 and the other mediated by AVO2 and SLM1. This Saccharomyces cerevisiae (strain ATCC 204508 / S288c) (Baker's yeast) protein is Target of rapamycin complex 2 subunit TSC11 (TSC11).